The primary structure comprises 183 residues: Ribulose bisphosphate carboxylase small subunit, chloroplastic 1 (183 aa).

A chloroplast-targeting transit peptide spans 1 to 58; that stretch reads MASSMLSNAAMATTAATAGAQASMVAPFNGLKSFATFPITKKSSNDFSSLPSNGGRVQ.

The protein belongs to the RuBisCO small chain family. As to quaternary structure, heterohexadecamer of 8 large and 8 small subunits.

The protein localises to the plastid. It is found in the chloroplast. RuBisCO catalyzes two reactions: the carboxylation of D-ribulose 1,5-bisphosphate, the primary event in carbon dioxide fixation, as well as the oxidative fragmentation of the pentose substrate. Both reactions occur simultaneously and in competition at the same active site. Although the small subunit is not catalytic it is essential for maximal activity. The protein is Ribulose bisphosphate carboxylase small subunit, chloroplastic 1 of Amaranthus hypochondriacus (Prince-of-Wales feather).